The following is a 252-amino-acid chain: Phosphate import ATP-binding protein PstB (252 aa).

An ABC transporter domain is found at 6–247 (ISAENLNLFY…PKDQRTEDYI (242 aa)). 38–45 (GPSGCGKS) provides a ligand contact to ATP.

It belongs to the ABC transporter superfamily. Phosphate importer (TC 3.A.1.7) family. As to quaternary structure, the complex is composed of two ATP-binding proteins (PstB), two transmembrane proteins (PstC and PstA) and a solute-binding protein (PstS).

It localises to the cell membrane. The enzyme catalyses phosphate(out) + ATP + H2O = ADP + 2 phosphate(in) + H(+). In terms of biological role, part of the ABC transporter complex PstSACB involved in phosphate import. Responsible for energy coupling to the transport system. This chain is Phosphate import ATP-binding protein PstB, found in Heliobacterium mobile (Heliobacillus mobilis).